The sequence spans 196 residues: Mitochondrial intermembrane space cysteine motif-containing protein MIX23 (196 aa).

A Cx14C motif motif is present at residues 99 to 114; it reads CEKEAAEMKNETDQQC. The short motif at 178–192 is the Cx13C motif element; sequence CEQNNDYLKEFTQFC.

This sequence belongs to the MIX23 family.

It localises to the mitochondrion intermembrane space. Regulator of the mitochondrial protein import machinery that is localized in the mitochondrial intermembrane space (IMS) and facilitates the transport of proteins from the cytosol into the mitochondrial matrix. Not essential for mitochondrial protein import but induced and required when mitochondrial import is compromised. Stimulates or stabilizes the translocation into the mitochondria of proteins such as OXA1, ATP1 and COX12. The chain is Mitochondrial intermembrane space cysteine motif-containing protein MIX23 from Saccharomyces cerevisiae (strain ATCC 204508 / S288c) (Baker's yeast).